The chain runs to 113 residues: Protein translation factor SUI1 homolog 2 (113 aa).

S2 carries the post-translational modification N-acetylserine.

This sequence belongs to the SUI1 family.

In terms of biological role, probably involved in translation. The polypeptide is Protein translation factor SUI1 homolog 2 (Arabidopsis thaliana (Mouse-ear cress)).